Here is a 262-residue protein sequence, read N- to C-terminus: Glutamate racemase (262 aa).

Residues 5–6 (DS) and 37–38 (YG) each bind substrate. Residue cysteine 69 is the Proton donor/acceptor of the active site. 70-71 (NT) is a substrate binding site. Catalysis depends on cysteine 181, which acts as the Proton donor/acceptor. Position 182–183 (182–183 (TH)) interacts with substrate.

It belongs to the aspartate/glutamate racemases family.

The enzyme catalyses L-glutamate = D-glutamate. It participates in cell wall biogenesis; peptidoglycan biosynthesis. In terms of biological role, provides the (R)-glutamate required for cell wall biosynthesis. The protein is Glutamate racemase of Buchnera aphidicola subsp. Acyrthosiphon pisum (strain APS) (Acyrthosiphon pisum symbiotic bacterium).